Here is a 198-residue protein sequence, read N- to C-terminus: Pyridoxal 5'-phosphate synthase subunit PdxT (198 aa).

L-glutamine is bound at residue 52–54 (GES). The active-site Nucleophile is cysteine 84. Residues arginine 115 and 143-144 (IR) each bind L-glutamine. Catalysis depends on charge relay system residues histidine 179 and glutamate 181.

Belongs to the glutaminase PdxT/SNO family. In the presence of PdxS, forms a dodecamer of heterodimers. Only shows activity in the heterodimer.

The catalysed reaction is aldehydo-D-ribose 5-phosphate + D-glyceraldehyde 3-phosphate + L-glutamine = pyridoxal 5'-phosphate + L-glutamate + phosphate + 3 H2O + H(+). It carries out the reaction L-glutamine + H2O = L-glutamate + NH4(+). The protein operates within cofactor biosynthesis; pyridoxal 5'-phosphate biosynthesis. Its function is as follows. Catalyzes the hydrolysis of glutamine to glutamate and ammonia as part of the biosynthesis of pyridoxal 5'-phosphate. The resulting ammonia molecule is channeled to the active site of PdxS. The protein is Pyridoxal 5'-phosphate synthase subunit PdxT of Methanococcoides burtonii (strain DSM 6242 / NBRC 107633 / OCM 468 / ACE-M).